The chain runs to 498 residues: Interferon regulatory factor 5 (498 aa).

At Thr10 the chain carries Phosphothreonine. A Nuclear localization signal motif is present at residues 12–18 (PRRVRLK). A DNA-binding region (IRF tryptophan pentad repeat) is located at residues 14 to 122 (RVRLKPWLVA…QPYKIYEVCS (109 aa)). The segment at 121 to 207 (CSNGPAPTDS…SPLAPPPGNP (87 aa)) is disordered. The Nuclear export signal motif lies at 150–160 (LQRMLPSLSLT). Residue Ser158 is modified to Phosphoserine; by TBK1. Pro residues predominate over residues 168–206 (TLQPPTLRPPTLQPPTLQPPVVLGPPAPDPSPLAPPPGN). Phosphoserine; by TBK1 is present on Ser293. Ser301 is modified (phosphoserine). Glycyl lysine isopeptide (Lys-Gly) (interchain with G-Cter in ubiquitin) cross-links involve residues Lys411 and Lys412. Ser431, Ser435, Ser437, and Ser440 each carry phosphoserine. Ser446 bears the Phosphoserine; by IKKB mark. The interval 478-498 (PPGAGLGVGQGPWPMHPAGMQ) is disordered.

This sequence belongs to the IRF family. Homodimer, when phosphorylated. Interacts with TASL (via pLxIS motif); interaction takes place downstream of TLR7, TLR8 or TLR9, leading to its activation. Interacts with MYD88 and TRAF6. In terms of processing, phosphorylation of serine and threonine residues by IKBKB in a C-terminal autoinhibitory region, stimulates dimerization, transport into the nucleus, assembly with the coactivator CBP/EP300 and initiation of transcription. Post-translationally, 'Lys-63'-linked polyubiquitination by TRAF6 is required for activation.

The protein localises to the cytoplasm. It localises to the nucleus. Its activity is regulated as follows. Maintained as a monomer in an autoinhibited state. Phosphorylation and activation follow the following steps: innate adapter protein TASL recruits IRF5, thereby licensing IRF5 for phosphorylation by IKBKB. Phosphorylated IRF5 dissociates from the adapter proteins, dimerizes, and then enters the nucleus to induce IFNs. With respect to regulation, (Microbial infection) Activated upon coronavirus SARS-CoV-2 infection. Functionally, transcription factor that plays a critical role in innate immunity by activating expression of type I interferon (IFN) IFNA and INFB and inflammatory cytokines downstream of endolysosomal toll-like receptors TLR7, TLR8 and TLR9. Regulates the transcription of type I IFN genes (IFN-alpha and IFN-beta) and IFN-stimulated genes (ISG) by binding to an interferon-stimulated response element (ISRE) in their promoters. Can efficiently activate both the IFN-beta (IFNB) and the IFN-alpha (IFNA) genes and mediate their induction downstream of the TLR-activated, MyD88-dependent pathway. Key transcription factor regulating the IFN response during SARS-CoV-2 infection. This Homo sapiens (Human) protein is Interferon regulatory factor 5.